We begin with the raw amino-acid sequence, 190 residues long: Glycerol-3-phosphate acyltransferase 2 (190 aa).

A run of 5 helical transmembrane segments spans residues 1–21, 53–73, 76–96, 110–130, and 152–172; these read MNIL…ALIV, VIVA…PLIL, TINP…SVFA, VFLF…VLTL, and LIFE…SIII.

Belongs to the PlsY family. As to quaternary structure, probably interacts with PlsX.

It is found in the cell membrane. It carries out the reaction an acyl phosphate + sn-glycerol 3-phosphate = a 1-acyl-sn-glycero-3-phosphate + phosphate. The protein operates within lipid metabolism; phospholipid metabolism. Catalyzes the transfer of an acyl group from acyl-phosphate (acyl-PO(4)) to glycerol-3-phosphate (G3P) to form lysophosphatidic acid (LPA). This enzyme utilizes acyl-phosphate as fatty acyl donor, but not acyl-CoA or acyl-ACP. The protein is Glycerol-3-phosphate acyltransferase 2 of Bacillus anthracis.